A 174-amino-acid chain; its full sequence is MWVNLSCMCHIVDKLLELNLRRWNMRSTSIYVLASRWKKVVSDNTLIEGQRIRLWSFHSLAKLYIALVPLDPAPAPTLAILLAPAPTPSSPPVVTRDSDELYISHADAQEEGDRILPVHADNDWECLNLLAKVSEETTCLEVSQEANRRSSLVSDTELDLELRLSLPGKNSYVM.

The segment at residues 1-71 (MWVNLSCMCH…KLYIALVPLD (71 aa)) is a DNA-binding region (TF-B3).

The protein resides in the nucleus. In Arabidopsis thaliana (Mouse-ear cress), this protein is B3 domain-containing protein At2g31862.